A 231-amino-acid polypeptide reads, in one-letter code: Cytochrome c oxidase subunit 2 (231 aa).

At 1–14 (MATPAQLGLQNATS) the chain is on the mitochondrial intermembrane side. A helical membrane pass occupies residues 15-45 (PIMEELIAFHDHALMIIFLISSLVLYIISLM). Over 46–59 (LTTKLTHTSTMNAQ) the chain is Mitochondrial matrix. Residues 60 to 87 (EIEMIWTILPAIILIMIALPSLRILYMT) form a helical membrane-spanning segment. At 88–231 (DEFNKPYLTL…WASYLYIVSL (144 aa)) the chain is on the mitochondrial intermembrane side. Cu cation contacts are provided by H161, C196, E198, C200, H204, and M207. E198 lines the Mg(2+) pocket.

It belongs to the cytochrome c oxidase subunit 2 family. As to quaternary structure, component of the cytochrome c oxidase (complex IV, CIV), a multisubunit enzyme composed of 14 subunits. The complex is composed of a catalytic core of 3 subunits MT-CO1, MT-CO2 and MT-CO3, encoded in the mitochondrial DNA, and 11 supernumerary subunits COX4I, COX5A, COX5B, COX6A, COX6B, COX6C, COX7A, COX7B, COX7C, COX8 and NDUFA4, which are encoded in the nuclear genome. The complex exists as a monomer or a dimer and forms supercomplexes (SCs) in the inner mitochondrial membrane with NADH-ubiquinone oxidoreductase (complex I, CI) and ubiquinol-cytochrome c oxidoreductase (cytochrome b-c1 complex, complex III, CIII), resulting in different assemblies (supercomplex SCI(1)III(2)IV(1) and megacomplex MCI(2)III(2)IV(2)). Found in a complex with TMEM177, COA6, COX18, COX20, SCO1 and SCO2. Interacts with TMEM177 in a COX20-dependent manner. Interacts with COX20. Interacts with COX16. Cu cation is required as a cofactor.

The protein resides in the mitochondrion inner membrane. The enzyme catalyses 4 Fe(II)-[cytochrome c] + O2 + 8 H(+)(in) = 4 Fe(III)-[cytochrome c] + 2 H2O + 4 H(+)(out). Functionally, component of the cytochrome c oxidase, the last enzyme in the mitochondrial electron transport chain which drives oxidative phosphorylation. The respiratory chain contains 3 multisubunit complexes succinate dehydrogenase (complex II, CII), ubiquinol-cytochrome c oxidoreductase (cytochrome b-c1 complex, complex III, CIII) and cytochrome c oxidase (complex IV, CIV), that cooperate to transfer electrons derived from NADH and succinate to molecular oxygen, creating an electrochemical gradient over the inner membrane that drives transmembrane transport and the ATP synthase. Cytochrome c oxidase is the component of the respiratory chain that catalyzes the reduction of oxygen to water. Electrons originating from reduced cytochrome c in the intermembrane space (IMS) are transferred via the dinuclear copper A center (CU(A)) of subunit 2 and heme A of subunit 1 to the active site in subunit 1, a binuclear center (BNC) formed by heme A3 and copper B (CU(B)). The BNC reduces molecular oxygen to 2 water molecules using 4 electrons from cytochrome c in the IMS and 4 protons from the mitochondrial matrix. This is Cytochrome c oxidase subunit 2 (MT-CO2) from Aotus nigriceps (Black-headed night monkey).